Consider the following 60-residue polypeptide: LKCNKLVPLFYKTCPAGKDLCYKMYMVATPKVPVKRGCIDVCPKSSLLVKYVCCNTDRCN.

Intrachain disulfides connect cysteine 3–cysteine 21, cysteine 14–cysteine 38, cysteine 42–cysteine 53, and cysteine 54–cysteine 59.

This sequence belongs to the three-finger toxin family. Short-chain subfamily. Type IA cytotoxin sub-subfamily. Monomer in solution; Homodimer and oligomer in the presence of negatively charged lipids forming a pore with a size ranging between 20 and 30 Angstroms. Expressed by the venom gland.

It localises to the secreted. It is found in the target cell membrane. Shows cytolytic activity on many different cells by forming pore in lipid membranes. In vivo, increases heart rate or kills the animal by cardiac arrest. In addition, it binds to heparin with high affinity, interacts with Kv channel-interacting protein 1 (KCNIP1) in a calcium-independent manner, and binds to integrin alpha-V/beta-3 (ITGAV/ITGB3) with moderate affinity. Has hemolytic activity towards human erythrocytes (EC(50)=0.162 uM) and cytolytic activity towards various cell lines. The sequence is that of Cytotoxin 10 from Naja naja (Indian cobra).